Consider the following 386-residue polypeptide: Na(+)/H(+) antiporter NhaA (386 aa).

10 consecutive transmembrane segments (helical) span residues 10–30 (EFSI…NVAP), 45–65 (LSFH…IAAV), 84–104 (LNPL…YLAL), 116–136 (GWGI…RLIF), 142–162 (VIAF…VIIA), 169–189 (VLPV…IAFI), 261–281 (IIVD…GFSA), 287–307 (WLVF…FALL), 323–343 (HLLV…FVAG), and 358–378 (GAIL…LLGI).

It belongs to the NhaA Na(+)/H(+) (TC 2.A.33) antiporter family.

It is found in the cell inner membrane. It carries out the reaction Na(+)(in) + 2 H(+)(out) = Na(+)(out) + 2 H(+)(in). Its function is as follows. Na(+)/H(+) antiporter that extrudes sodium in exchange for external protons. The polypeptide is Na(+)/H(+) antiporter NhaA (Geotalea uraniireducens (strain Rf4) (Geobacter uraniireducens)).